The following is a 108-amino-acid chain: Ig kappa chain V-V region MOPC 149 (108 aa).

Residues 1–23 (DIQMTQSPDYLSASVGETVTITC) form a framework-1 region. A disulfide bridge links cysteine 23 with cysteine 88. Positions 24–34 (RASENIYSYLA) are complementarity-determining-1. Positions 35-49 (WYQQKQGKSPQLLVY) are framework-2. A complementarity-determining-2 region spans residues 50–56 (DAKTLVE). A framework-3 region spans residues 57–88 (GVPSRFSGSGSGTQFSLKINSLQPEDFGSYYC). The interval 89 to 97 (QHHYGIPFT) is complementarity-determining-3. Positions 98–108 (FGSGTKLEIKR) are framework-4.

The protein is Ig kappa chain V-V region MOPC 149 of Mus musculus (Mouse).